A 563-amino-acid chain; its full sequence is CDKN2A-interacting protein (563 aa).

Ala2 is subject to N-acetylalanine. An XRN2-binding (XTBD) domain is found at 19–126; the sequence is VETLRCEGET…KVKKRGISSS (108 aa). 2 disordered regions span residues 122-289 and 304-351; these read GISS…LLGS and SSSE…PSLL. Position 124 is a phosphoserine (Ser124). Residues 147-160 are compositionally biased toward basic and acidic residues; that stretch reads VERDHGKKSAKTDR. Low complexity-rich tracts occupy residues 168 to 216 and 234 to 248; these read SSPS…SSQV and SASF…SMNS. Residue Lys177 forms a Glycyl lysine isopeptide (Lys-Gly) (interchain with G-Cter in SUMO1) linkage. Phosphoserine is present on Ser234. Polar residues predominate over residues 249 to 262; sequence HMTQSTDNRQQSGS. A compositionally biased stretch (low complexity) spans 270 to 280; it reads GSSGSASQSSS. A Phosphothreonine modification is found at Thr340. The residue at position 371 (Ser371) is a Phosphoserine. Residues 445–520 enclose the DRBM domain; sequence NHGELLNAAI…SREALKLFLK (76 aa).

It belongs to the CARF family. As to quaternary structure, interacts with CDKN2A/p14ARF, p53/TP53 and MDM2. Interacts with CHEK2 and MAPK3. Interacts with XRN2. In terms of processing, may be ubiquitinated.

The protein localises to the nucleus. Its subcellular location is the nucleoplasm. Functionally, regulates DNA damage response and cell proliferation in a dose-dependent manner through a number of signaling pathways involved in cell proliferation, apoptosis and senescence. This Mus musculus (Mouse) protein is CDKN2A-interacting protein (Cdkn2aip).